A 492-amino-acid polypeptide reads, in one-letter code: Catalase-3 (492 aa).

Residues His-65 and Asn-138 contribute to the active site. Tyr-348 serves as a coordination point for heme.

This sequence belongs to the catalase family. As to quaternary structure, homotetramer and heterotetramer. At least six or seven isozymes are produced from a mixture of 3 gene products. Interacts with NCA1. Interacts with LSD1. Heme is required as a cofactor.

It is found in the peroxisome. The catalysed reaction is 2 H2O2 = O2 + 2 H2O. Its function is as follows. Occurs in almost all aerobically respiring organisms and serves to protect cells from the toxic effects of hydrogen peroxide. The polypeptide is Catalase-3 (CAT3) (Arabidopsis thaliana (Mouse-ear cress)).